We begin with the raw amino-acid sequence, 427 residues long: Trigger factor (427 aa).

Positions 163–248 (GDTVVIDFVG…IHEVKTKEVP (86 aa)) constitute a PPIase FKBP-type domain.

Belongs to the FKBP-type PPIase family. Tig subfamily.

It localises to the cytoplasm. It carries out the reaction [protein]-peptidylproline (omega=180) = [protein]-peptidylproline (omega=0). Involved in protein export. Acts as a chaperone by maintaining the newly synthesized protein in an open conformation. Functions as a peptidyl-prolyl cis-trans isomerase. The protein is Trigger factor of Streptococcus agalactiae serotype Ia (strain ATCC 27591 / A909 / CDC SS700).